The primary structure comprises 241 residues: Xyloglucan-specific endo-beta-1,4-glucanase 1 (241 aa).

The first 19 residues, 1–19 (MKGLLAGTIAAATFAVASA), serve as a signal peptide directing secretion. Residue glutamate 136 is part of the active site. N-linked (GlcNAc...) asparagine glycosylation is found at asparagine 174 and asparagine 190. Residue glutamate 222 is part of the active site.

It belongs to the glycosyl hydrolase 12 (cellulase H) family. As to quaternary structure, interacts with host apoplastic glucanase inhibitor GIP2.

The catalysed reaction is xyloglucan + H2O = xyloglucan oligosaccharides.. With respect to regulation, the xyloglucanase activity is inhibited by the binding of the host apoplastic glucanase inhibitor GIP2. Glycoside hydrolase that exhibits xyloglucanase activity. Acts as an important virulence factor during P.parasitica infection of its host Nicotiana benthamiana. Also acts as a pathogen-associated molecular pattern (PAMP) in host species, where it can trigger defense responses including cell death. The PAMP activity is independent of its xyloglucanase activity. With paralog XLP1, is required to elevate apoplastic sugar during P.parasitica infection. The polypeptide is Xyloglucan-specific endo-beta-1,4-glucanase 1 (Phytophthora nicotianae (strain INRA-310) (Phytophthora parasitica)).